The following is a 311-amino-acid chain: Phosphoribosylaminoimidazole-succinocarboxamide synthase (311 aa).

The protein belongs to the SAICAR synthetase family.

The catalysed reaction is 5-amino-1-(5-phospho-D-ribosyl)imidazole-4-carboxylate + L-aspartate + ATP = (2S)-2-[5-amino-1-(5-phospho-beta-D-ribosyl)imidazole-4-carboxamido]succinate + ADP + phosphate + 2 H(+). The protein operates within purine metabolism; IMP biosynthesis via de novo pathway; 5-amino-1-(5-phospho-D-ribosyl)imidazole-4-carboxamide from 5-amino-1-(5-phospho-D-ribosyl)imidazole-4-carboxylate: step 1/2. This Azoarcus sp. (strain BH72) protein is Phosphoribosylaminoimidazole-succinocarboxamide synthase.